The following is a 126-amino-acid chain: Adenosine 5'-monophosphoramidase HINT1 (126 aa).

An N-acetylalanine modification is found at A2. An HIT domain is found at 18-126 (IFGKIIRKEI…GGRQMHWPPG (109 aa)). Residues K21 and K30 each carry the N6-acetyllysine modification. 43-44 (DI) is a binding site for AMP. Phosphoserine is present on residues S45 and S72. AMP-binding positions include N99, 105–107 (GQS), and 112–114 (HLH). The short motif at 110–114 (HVHLH) is the Histidine triad motif element. H112 functions as the Tele-AMP-histidine intermediate in the catalytic mechanism.

It belongs to the HINT family. In terms of assembly, homodimer. Interacts with CDK7. Interacts with RUVBL1 and RUVBL2 and is associated with the LEF1/TCF1-CTNNB1 complex and with a KAT5 histone acetyltransferase complex. Identified in a complex with MITF and CTNNB1. Interacts with CDC34 and RBX1, and is part of a SCF (SKP2-CUL1-F-box protein) E3 ubiquitin-protein ligase complex. Interacts with SUMO1, SUMO2 and RGS17. Interacts with the Ten-1 ICD form of TENM1. Interacts with CALM1; interaction increases in the presence of calcium ions.

The protein resides in the cytoplasm. It is found in the nucleus. It catalyses the reaction adenosine 5'-phosphoramidate + H2O = AMP + NH4(+). Its function is as follows. Exhibits adenosine 5'-monophosphoramidase activity, hydrolyzing purine nucleotide phosphoramidates with a single phosphate group such as adenosine 5'monophosphoramidate (AMP-NH2) to yield AMP and NH2. Hydrolyzes adenosine 5'monophosphomorpholidate (AMP-morpholidate) and guanosine 5'monophosphomorpholidate (GMP-morpholidate). Hydrolyzes lysyl-AMP (AMP-N-epsilon-(N-alpha-acetyl lysine methyl ester)) generated by lysine tRNA ligase, as well as Met-AMP, His-AMP and Asp-AMP, lysyl-GMP (GMP-N-epsilon-(N-alpha-acetyl lysine methyl ester)) and AMP-N-alanine methyl ester. Can also convert adenosine 5'-O-phosphorothioate and guanosine 5'-O-phosphorothioate to the corresponding nucleoside 5'-O-phosphates with concomitant release of hydrogen sulfide. In addition, functions as a scaffolding protein that modulates transcriptional activation by the LEF1/TCF1-CTNNB1 complex and by the complex formed with MITF and CTNNB1. Modulates p53/TP53 levels and p53/TP53-mediated apoptosis. Modulates proteasomal degradation of target proteins by the SCF (SKP2-CUL1-F-box protein) E3 ubiquitin-protein ligase complex. Also exhibits SUMO-specific isopeptidase activity, deconjugating SUMO1 from RANGAP1 and RGS17. The chain is Adenosine 5'-monophosphoramidase HINT1 (HINT1) from Pongo abelii (Sumatran orangutan).